The chain runs to 416 residues: Dihydrolipoyllysine-residue succinyltransferase component of 2-oxoglutarate dehydrogenase complex (416 aa).

The Lipoyl-binding domain occupies 3-78 (IVDVKVPQLS…VADEIIAKID (76 aa)). An N6-lipoyllysine modification is found at K44. Residues 115–152 (VAMPSAAKLMAEAGLSAGQVAGTGKDGRITKGDALAAA) enclose the Peripheral subunit-binding (PSBD) domain. Active-site residues include H387 and D391.

It belongs to the 2-oxoacid dehydrogenase family. In terms of assembly, forms a 24-polypeptide structural core with octahedral symmetry. Part of the 2-oxoglutarate dehydrogenase (OGDH) complex composed of E1 (2-oxoglutarate dehydrogenase), E2 (dihydrolipoamide succinyltransferase) and E3 (dihydrolipoamide dehydrogenase); the complex contains multiple copies of the three enzymatic components (E1, E2 and E3). (R)-lipoate is required as a cofactor.

It catalyses the reaction N(6)-[(R)-dihydrolipoyl]-L-lysyl-[protein] + succinyl-CoA = N(6)-[(R)-S(8)-succinyldihydrolipoyl]-L-lysyl-[protein] + CoA. Its pathway is amino-acid degradation; L-lysine degradation via saccharopine pathway; glutaryl-CoA from L-lysine: step 6/6. E2 component of the 2-oxoglutarate dehydrogenase (OGDH) complex which catalyzes the second step in the conversion of 2-oxoglutarate to succinyl-CoA and CO(2). This Cupriavidus necator (strain ATCC 17699 / DSM 428 / KCTC 22496 / NCIMB 10442 / H16 / Stanier 337) (Ralstonia eutropha) protein is Dihydrolipoyllysine-residue succinyltransferase component of 2-oxoglutarate dehydrogenase complex (sucB).